The primary structure comprises 220 residues: Adenylate kinase (220 aa).

10–15 contacts ATP; sequence GAGKGT. The interval 30-59 is NMP; that stretch reads STGDMLRAAVKAGTPLGVEAKGYMDAGKLV. AMP contacts are provided by residues Thr31, Arg36, 57–59, 85–88, and Gln92; these read KLV and GFPR. Positions 122-159 are LID; sequence GRRTHPASGRTYHVKFNPPKVEGHDDVTGEPLIQRDDD. Residues Arg123 and 132-133 each bind ATP; that span reads TY. Residues Arg156 and Arg167 each coordinate AMP. An ATP-binding site is contributed by Gly206.

Belongs to the adenylate kinase family. As to quaternary structure, monomer.

Its subcellular location is the cytoplasm. It catalyses the reaction AMP + ATP = 2 ADP. It participates in purine metabolism; AMP biosynthesis via salvage pathway; AMP from ADP: step 1/1. Its function is as follows. Catalyzes the reversible transfer of the terminal phosphate group between ATP and AMP. Plays an important role in cellular energy homeostasis and in adenine nucleotide metabolism. The polypeptide is Adenylate kinase (Burkholderia lata (strain ATCC 17760 / DSM 23089 / LMG 22485 / NCIMB 9086 / R18194 / 383)).